We begin with the raw amino-acid sequence, 433 residues long: GTPase Obg (433 aa).

Residues 4-162 (EDFVDRVTIF…RWLELELKLL (159 aa)) enclose the Obg domain. The OBG-type G domain maps to 163–334 (ADAGLIGFPN…LKQKIFEIVG (172 aa)). GTP is bound by residues 169–176 (GFPNVGKS), 194–198 (FTTLV), 216–219 (DIPG), 286–289 (NKID), and 315–317 (SAL). Residues Ser176 and Thr196 each coordinate Mg(2+). In terms of domain architecture, OCT spans 356–433 (TKIEERFDFE…IGQYSFEYKE (78 aa)).

Belongs to the TRAFAC class OBG-HflX-like GTPase superfamily. OBG GTPase family. Monomer. The cofactor is Mg(2+).

The protein resides in the cytoplasm. Functionally, an essential GTPase which binds GTP, GDP and possibly (p)ppGpp with moderate affinity, with high nucleotide exchange rates and a fairly low GTP hydrolysis rate. Plays a role in control of the cell cycle, stress response, ribosome biogenesis and in those bacteria that undergo differentiation, in morphogenesis control. The chain is GTPase Obg from Pseudothermotoga lettingae (strain ATCC BAA-301 / DSM 14385 / NBRC 107922 / TMO) (Thermotoga lettingae).